The following is a 693-amino-acid chain: Elongation factor G (693 aa).

One can recognise a tr-type G domain in the interval 8 to 284 (HMVRNIGIAA…AVIDYLPAPD (277 aa)). GTP-binding positions include 17-24 (AHIDAGKT), 81-85 (DTPGH), and 135-138 (NKMD).

It belongs to the TRAFAC class translation factor GTPase superfamily. Classic translation factor GTPase family. EF-G/EF-2 subfamily.

Its subcellular location is the cytoplasm. Functionally, catalyzes the GTP-dependent ribosomal translocation step during translation elongation. During this step, the ribosome changes from the pre-translocational (PRE) to the post-translocational (POST) state as the newly formed A-site-bound peptidyl-tRNA and P-site-bound deacylated tRNA move to the P and E sites, respectively. Catalyzes the coordinated movement of the two tRNA molecules, the mRNA and conformational changes in the ribosome. This chain is Elongation factor G, found in Nautilia profundicola (strain ATCC BAA-1463 / DSM 18972 / AmH).